Consider the following 171-residue polypeptide: 3-hydroxydecanoyl-[acyl-carrier-protein] dehydratase (171 aa).

His-71 is a catalytic residue.

The protein belongs to the thioester dehydratase family. FabA subfamily. As to quaternary structure, homodimer.

It localises to the cytoplasm. It carries out the reaction a (3R)-hydroxyacyl-[ACP] = a (2E)-enoyl-[ACP] + H2O. The enzyme catalyses (3R)-hydroxydecanoyl-[ACP] = (2E)-decenoyl-[ACP] + H2O. It catalyses the reaction (2E)-decenoyl-[ACP] = (3Z)-decenoyl-[ACP]. Its pathway is lipid metabolism; fatty acid biosynthesis. Its function is as follows. Necessary for the introduction of cis unsaturation into fatty acids. Catalyzes the dehydration of (3R)-3-hydroxydecanoyl-ACP to E-(2)-decenoyl-ACP and then its isomerization to Z-(3)-decenoyl-ACP. Can catalyze the dehydratase reaction for beta-hydroxyacyl-ACPs with saturated chain lengths up to 16:0, being most active on intermediate chain length. This Hamiltonella defensa subsp. Acyrthosiphon pisum (strain 5AT) protein is 3-hydroxydecanoyl-[acyl-carrier-protein] dehydratase.